The primary structure comprises 134 residues: Probable 4-amino-4-deoxy-L-arabinose-phosphoundecaprenol flippase subunit ArnF (134 aa).

Over 1 to 5 (MNRRR) the chain is Cytoplasmic. The helical transmembrane segment at 6-26 (GILFALASVLLVSVAQLSMRW) threads the bilayer. The Periplasmic portion of the chain corresponds to 27-45 (SMTRLPRPDQWLSVPSVDS). A helical transmembrane segment spans residues 46–66 (VALAVVLAAIFAYALSMLCWL). Over 67-77 (AALRDLPLGRA) the chain is Cytoplasmic. The chain crosses the membrane as a helical span at residues 78 to 98 (YSLLSISYALVYLLAASLPLF). At 99–101 (NES) the chain is on the periplasmic side. A helical transmembrane segment spans residues 102–122 (FSFSKSLGVALVMLGVITINT). The Cytoplasmic segment spans residues 123–134 (RPARAPELRSSP).

It belongs to the ArnF family. In terms of assembly, heterodimer of ArnE and ArnF.

The protein localises to the cell inner membrane. It functions in the pathway bacterial outer membrane biogenesis; lipopolysaccharide biosynthesis. Functionally, translocates 4-amino-4-deoxy-L-arabinose-phosphoundecaprenol (alpha-L-Ara4N-phosphoundecaprenol) from the cytoplasmic to the periplasmic side of the inner membrane. In Pseudomonas fluorescens (strain Pf0-1), this protein is Probable 4-amino-4-deoxy-L-arabinose-phosphoundecaprenol flippase subunit ArnF.